A 91-amino-acid chain; its full sequence is Probable Fe(2+)-trafficking protein (91 aa).

It belongs to the Fe(2+)-trafficking protein family.

Could be a mediator in iron transactions between iron acquisition and iron-requiring processes, such as synthesis and/or repair of Fe-S clusters in biosynthetic enzymes. In Ralstonia pickettii (strain 12J), this protein is Probable Fe(2+)-trafficking protein.